Here is a 386-residue protein sequence, read N- to C-terminus: uncharacterized protein (386 aa).

The next 12 helical transmembrane spans lie at 8–28, 43–63, 79–99, 102–122, 134–154, 156–176, 216–236, 241–261, 272–292, 297–317, 342–362, and 365–385; these read VFVI…IAPI, IGLI…PVGV, FFYG…GFLI, IFTG…IAAI, IFNS…GILA, MYGI…AAII, FIIN…LALY, NITI…MALL, LGNI…YLLS, FLTI…SSTA, INIG…ILGI, and MYKF…LRIE.

It belongs to the major facilitator superfamily.

The protein resides in the cell membrane. This is an uncharacterized protein from Methanocaldococcus jannaschii (strain ATCC 43067 / DSM 2661 / JAL-1 / JCM 10045 / NBRC 100440) (Methanococcus jannaschii).